The primary structure comprises 463 residues: Chaperone SurA (463 aa).

The N-terminal stretch at 1 to 25 (MTKPFSVVLASLLAITSTISPLASA) is a signal peptide. PpiC domains follow at residues 174–276 (GSKY…KLME) and 289–388 (VTEY…QRVG). Disordered stretches follow at residues 329–348 (ATAK…GDLG) and 434–463 (GDRA…KPTR). The segment covering 439-452 (NNATAAPAKSADPA) has biased composition (low complexity). Residues 453–463 (LPAPPPAKPTR) show a composition bias toward pro residues.

Its subcellular location is the periplasm. The catalysed reaction is [protein]-peptidylproline (omega=180) = [protein]-peptidylproline (omega=0). In terms of biological role, chaperone involved in the correct folding and assembly of outer membrane proteins. Recognizes specific patterns of aromatic residues and the orientation of their side chains, which are found more frequently in integral outer membrane proteins. May act in both early periplasmic and late outer membrane-associated steps of protein maturation. In Xanthomonas oryzae pv. oryzae (strain MAFF 311018), this protein is Chaperone SurA.